A 201-amino-acid polypeptide reads, in one-letter code: 3-isopropylmalate dehydratase small subunit (201 aa).

The protein belongs to the LeuD family. LeuD type 1 subfamily. Heterodimer of LeuC and LeuD.

The enzyme catalyses (2R,3S)-3-isopropylmalate = (2S)-2-isopropylmalate. The protein operates within amino-acid biosynthesis; L-leucine biosynthesis; L-leucine from 3-methyl-2-oxobutanoate: step 2/4. Catalyzes the isomerization between 2-isopropylmalate and 3-isopropylmalate, via the formation of 2-isopropylmaleate. The sequence is that of 3-isopropylmalate dehydratase small subunit from Shewanella oneidensis (strain ATCC 700550 / JCM 31522 / CIP 106686 / LMG 19005 / NCIMB 14063 / MR-1).